A 138-amino-acid chain; its full sequence is Small ribosomal subunit protein uS11c (138 aa).

Belongs to the universal ribosomal protein uS11 family. As to quaternary structure, part of the 30S ribosomal subunit.

The protein resides in the plastid. It is found in the chloroplast. The sequence is that of Small ribosomal subunit protein uS11c from Acorus calamus (Sweet flag).